The following is a 344-amino-acid chain: Tetraacyldisaccharide 4'-kinase (344 aa).

68 to 75 is an ATP binding site; sequence TAGGNGKT.

Belongs to the LpxK family.

It carries out the reaction a lipid A disaccharide + ATP = a lipid IVA + ADP + H(+). It functions in the pathway glycolipid biosynthesis; lipid IV(A) biosynthesis; lipid IV(A) from (3R)-3-hydroxytetradecanoyl-[acyl-carrier-protein] and UDP-N-acetyl-alpha-D-glucosamine: step 6/6. Its function is as follows. Transfers the gamma-phosphate of ATP to the 4'-position of a tetraacyldisaccharide 1-phosphate intermediate (termed DS-1-P) to form tetraacyldisaccharide 1,4'-bis-phosphate (lipid IVA). The sequence is that of Tetraacyldisaccharide 4'-kinase from Photobacterium profundum (strain SS9).